Here is a 266-residue protein sequence, read N- to C-terminus: Apolipoprotein A-I (266 aa).

The N-terminal stretch at 1-18 (MKAVVLTLAVLFLTGSQA) is a signal peptide. A run of 2 repeats spans residues 67-88 (LKLL…EQIG) and 89-110 (PVTQ…QEMS). A 10 X approximate tandem repeats region spans residues 67–266 (LKLLDNWDSL…DEAAKKLNAQ (200 aa)). At M109 the chain carries Methionine sulfoxide. The 3; half-length repeat unit spans residues 111-121 (KDLEEVKQKVQ). 5 tandem repeats follow at residues 122–142 (PYLD…RQKV), 144–165 (PLGA…EKLS), 166–187 (PLGE…AQLA), 188–210 (PYSD…DGGA), and 211–231 (SLAE…EKAK). The stretch at 232-242 (PALEDLRQGLL) is one 9; half-length repeat. Copy 10 of the repeat occupies 243 to 266 (PVLESFKVSLLAAVDEAAKKLNAQ).

This sequence belongs to the apolipoprotein A1/A4/E family. Homodimer. Interacts with APOA1BP and CLU. Component of a sperm activating protein complex (SPAP), consisting of APOA1, an immunoglobulin heavy chain, an immunoglobulin light chain and albumin. Interacts with NDRG1. Interacts with SCGB3A2. Interacts with NAXE and YJEFN3. Glycosylated. Post-translationally, palmitoylated. In terms of processing, phosphorylation sites are present in the extracellular medium. Major protein of plasma HDL, also found in chylomicrons.

Its subcellular location is the secreted. Functionally, participates in the reverse transport of cholesterol from tissues to the liver for excretion by promoting cholesterol efflux from tissues and by acting as a cofactor for the lecithin cholesterol acyltransferase (LCAT). As part of the SPAP complex, activates spermatozoa motility. The polypeptide is Apolipoprotein A-I (APOA1) (Ailuropoda melanoleuca (Giant panda)).